The chain runs to 317 residues: Pantothenate kinase (317 aa).

ATP is bound at residue G99 to S106.

Belongs to the prokaryotic pantothenate kinase family.

The protein localises to the cytoplasm. It catalyses the reaction (R)-pantothenate + ATP = (R)-4'-phosphopantothenate + ADP + H(+). The protein operates within cofactor biosynthesis; coenzyme A biosynthesis; CoA from (R)-pantothenate: step 1/5. The polypeptide is Pantothenate kinase (Histophilus somni (strain 2336) (Haemophilus somnus)).